A 389-amino-acid polypeptide reads, in one-letter code: MGGCFSNRIKTDIASSTWLSSKFLSRDGSKGSSTASFSYMPRTEGEILQNANLKNFSLSELKSATRNFRPDSVVGEGGFGCVFKGWIDESSLAPSKPGTGIVIAVKRLNQEGFQGHREWLAEINYLGQLDHPNLVKLIGYCLEEEHRLLVYEFMTRGSLENHLFRRGTFYQPLSWNTRVRMALGAARGLAFLHNAQPQVIYRDFKASNILLDSNYNAKLSDFGLARDGPMGDNSHVSTRVMGTQGYAAPEYLATGHLSVKSDVYSFGVVLLELLSGRRAIDKNQPVGEHNLVDWARPYLTNKRRLLRVMDPRLQGQYSLTRALKIAVLALDCISIDAKSRPTMNEIVKTMEELHIQKEASKEQQNPQISIDNIINKSPQAVNYPRPSIM.

A lipid anchor (N-myristoyl glycine) is attached at Gly2. The S-palmitoyl cysteine moiety is linked to residue Cys4. The Protein kinase domain maps to 68 to 353 (FRPDSVVGEG…NEIVKTMEEL (286 aa)). ATP is bound by residues 74–82 (VGEGGFGCV) and Lys106. The residue at position 151 (Tyr151) is a Phosphotyrosine. The Proton acceptor role is filled by Asp203. Phosphoserine is present on residues Ser207 and Ser237. Phosphothreonine occurs at positions 238 and 243. Tyr251 carries the phosphotyrosine modification.

Belongs to the protein kinase superfamily. Ser/Thr protein kinase family. Roots, leaves and stems.

Its subcellular location is the cell membrane. The catalysed reaction is L-seryl-[protein] + ATP = O-phospho-L-seryl-[protein] + ADP + H(+). The enzyme catalyses L-threonyl-[protein] + ATP = O-phospho-L-threonyl-[protein] + ADP + H(+). Its function is as follows. May play a role in the regulation of plant growth and development. May be involved in plant defense signaling. The chain is Probable serine/threonine-protein kinase PBL11 from Arabidopsis thaliana (Mouse-ear cress).